Here is a 444-residue protein sequence, read N- to C-terminus: UDP-N-acetylmuramoylalanine--D-glutamate ligase (444 aa).

ATP is bound at residue 118-124 (GTNGKTT).

This sequence belongs to the MurCDEF family.

The protein localises to the cytoplasm. The enzyme catalyses UDP-N-acetyl-alpha-D-muramoyl-L-alanine + D-glutamate + ATP = UDP-N-acetyl-alpha-D-muramoyl-L-alanyl-D-glutamate + ADP + phosphate + H(+). Its pathway is cell wall biogenesis; peptidoglycan biosynthesis. Cell wall formation. Catalyzes the addition of glutamate to the nucleotide precursor UDP-N-acetylmuramoyl-L-alanine (UMA). The protein is UDP-N-acetylmuramoylalanine--D-glutamate ligase of Protochlamydia amoebophila (strain UWE25).